A 365-amino-acid polypeptide reads, in one-letter code: Outer membrane lipoprotein A (365 aa).

The N-terminal stretch at 1 to 19 (MNIATKLMASLVASVVLTA) is a signal peptide. Positions 19-121 (ACSGGGSSGS…KGEELSKDKS (103 aa)) are disordered. Residue cysteine 20 is the site of N-palmitoyl cysteine attachment. A lipid anchor (S-diacylglycerol cysteine) is attached at cysteine 20. Basic and acidic residues-rich tracts occupy residues 48–68 (EQPK…EPKE) and 105–121 (NPQK…KDKS).

It is found in the cell outer membrane. This Actinobacillus pleuropneumoniae (Haemophilus pleuropneumoniae) protein is Outer membrane lipoprotein A (omlA).